The following is a 182-amino-acid chain: ATP-dependent protease subunit HslV (182 aa).

Thr-12 is an active-site residue. Na(+) contacts are provided by Ala-167, Cys-170, and Thr-173.

The protein belongs to the peptidase T1B family. HslV subfamily. A double ring-shaped homohexamer of HslV is capped on each side by a ring-shaped HslU homohexamer. The assembly of the HslU/HslV complex is dependent on binding of ATP.

Its subcellular location is the cytoplasm. The catalysed reaction is ATP-dependent cleavage of peptide bonds with broad specificity.. Allosterically activated by HslU binding. Its function is as follows. Protease subunit of a proteasome-like degradation complex believed to be a general protein degrading machinery. The protein is ATP-dependent protease subunit HslV of Chlorobium chlorochromatii (strain CaD3).